Here is a 219-residue protein sequence, read N- to C-terminus: N-(5'-phosphoribosyl)anthranilate isomerase (219 aa).

This sequence belongs to the TrpF family.

It catalyses the reaction N-(5-phospho-beta-D-ribosyl)anthranilate = 1-(2-carboxyphenylamino)-1-deoxy-D-ribulose 5-phosphate. The protein operates within amino-acid biosynthesis; L-tryptophan biosynthesis; L-tryptophan from chorismate: step 3/5. In Bradyrhizobium sp. (strain BTAi1 / ATCC BAA-1182), this protein is N-(5'-phosphoribosyl)anthranilate isomerase.